A 161-amino-acid chain; its full sequence is Large ribosomal subunit protein bL17 (161 aa).

Positions 132–144 (ARAKRAEDNRKAL) are enriched in basic and acidic residues. A disordered region spans residues 132-161 (ARAKRAEDNRKALEAQQAQAEAETTGETKA). Low complexity predominate over residues 145–161 (EAQQAQAEAETTGETKA).

This sequence belongs to the bacterial ribosomal protein bL17 family. As to quaternary structure, part of the 50S ribosomal subunit. Contacts protein L32.

This Koribacter versatilis (strain Ellin345) protein is Large ribosomal subunit protein bL17.